The sequence spans 301 residues: Glycine--tRNA ligase alpha subunit (301 aa).

The protein belongs to the class-II aminoacyl-tRNA synthetase family. As to quaternary structure, tetramer of two alpha and two beta subunits.

The protein resides in the cytoplasm. The catalysed reaction is tRNA(Gly) + glycine + ATP = glycyl-tRNA(Gly) + AMP + diphosphate. This Campylobacter hominis (strain ATCC BAA-381 / DSM 21671 / CCUG 45161 / LMG 19568 / NCTC 13146 / CH001A) protein is Glycine--tRNA ligase alpha subunit.